The primary structure comprises 404 residues: Cytochrome P450 monooxygenase avaI (404 aa).

Heme is bound at residue Cys382.

It belongs to the cytochrome P450 family. The cofactor is heme.

It functions in the pathway secondary metabolite biosynthesis. Its function is as follows. Cytochrome P450 monooxygenase; part of the cluster that mediates the biosynthesis of a highly modified cyclo-arginine-tryptophan dipeptide (cRW). The first step of the pathway is perfornmed by the arginine-containing cyclodipeptide synthase (RCPDS) avaA that acts as the scaffold-generating enzyme and is responsible for formation of the cyclo-Arg-Trp (cRW) diketopiperazine. AvaB then acts as a multifunctional flavoenzyme that is responsible for generating the cyclo-Arg-formylkynurenine DKP, which can be deformylated by avaC. AvaB then further catalyzes an additional N-oxidation followed by cyclization and dehydration. The next step is an N-acetylation of the guanidine group catalyzed by the arginine N-acetyltransferase avaD. The roles of the additional enzymes identified within the ava cluster still have to be determined. In Aspergillus versicolor, this protein is Cytochrome P450 monooxygenase avaI.